A 166-amino-acid chain; its full sequence is Small ribosomal subunit protein bS18m (166 aa).

The transit peptide at 1–31 directs the protein to the mitochondrion; that stretch reads MLGRRIFSPAPNRGFILCNLIQSNNSTRRGF. The interval 29–48 is disordered; it reads RGFSDNRKFNERNSEASSNV. Basic and acidic residues predominate over residues 30 to 42; sequence GFSDNRKFNERNS.

The protein belongs to the bacterial ribosomal protein bS18 family. Component of the mitochondrial small ribosomal subunit (mt-SSU). Mature yeast 74S mitochondrial ribosomes consist of a small (37S) and a large (54S) subunit. The 37S small subunit contains a 15S ribosomal RNA (15S mt-rRNA) and at least 32 different proteins. The 54S large subunit contains a 21S rRNA (21S mt-rRNA) and at least 45 different proteins.

It localises to the mitochondrion. Its function is as follows. Component of the mitochondrial ribosome (mitoribosome), a dedicated translation machinery responsible for the synthesis of mitochondrial genome-encoded proteins, including at least some of the essential transmembrane subunits of the mitochondrial respiratory chain. The mitoribosomes are attached to the mitochondrial inner membrane and translation products are cotranslationally integrated into the membrane. The sequence is that of Small ribosomal subunit protein bS18m (rsm18) from Schizosaccharomyces pombe (strain 972 / ATCC 24843) (Fission yeast).